We begin with the raw amino-acid sequence, 71 residues long: Disintegrin applaggin (71 aa).

The Disintegrin domain occupies 1 to 71 (EAGEECDCGS…SAGCPRNPFH (71 aa)). 6 disulfides stabilise this stretch: C6-C21, C8-C16, C15-C38, C29-C35, C34-C58, and C47-C65. Residues 50-52 (RGD) carry the Cell attachment site motif.

It belongs to the venom metalloproteinase (M12B) family. P-II subfamily. P-IIa sub-subfamily. Monomer (disintegrin). As to expression, expressed by the venom gland.

Its subcellular location is the secreted. In terms of biological role, inhibits fibrinogen interaction with platelets. Acts by binding to alpha-IIb/beta-3 (ITGA2B/ITGB3) on the platelet surface and inhibits aggregation induced by ADP, thrombin, platelet-activating factor and collagen. This chain is Disintegrin applaggin, found in Agkistrodon piscivorus piscivorus (Eastern cottonmouth).